The sequence spans 917 residues: ABC transporter A family member 12 (917 aa).

A run of 6 helical transmembrane segments spans residues 34-54 (LILV…VLDA), 323-343 (IASL…FPVI), 377-397 (FLTI…AIGL), 409-429 (FVFY…VSSI), 435-455 (TVTV…SFLF), and 508-528 (GEVF…AYYI). Residues 595–832 (ILCDNLKKVY…YGGSYVFTMT (238 aa)) enclose the ABC transporter domain. ATP is bound at residue 633 to 640 (GPNGAGKT).

The protein belongs to the ABC transporter superfamily. ABCA family. CPR flippase (TC 3.A.1.211) subfamily.

Its subcellular location is the membrane. The polypeptide is ABC transporter A family member 12 (ABCA12) (Arabidopsis thaliana (Mouse-ear cress)).